Here is a 306-residue protein sequence, read N- to C-terminus: Small ribosomal subunit protein uS2 (306 aa).

Residues G229 to P238 show a composition bias toward basic and acidic residues. Residues G229–R306 form a disordered region. Residues Q261–E287 show a composition bias toward acidic residues.

Belongs to the universal ribosomal protein uS2 family.

This is Small ribosomal subunit protein uS2 from Rubrobacter xylanophilus (strain DSM 9941 / JCM 11954 / NBRC 16129 / PRD-1).